Consider the following 91-residue polypeptide: Anther-specific protein RTS (91 aa).

The first 21 residues, Met1–Ala21, serve as a signal peptide directing secretion.

Functionally, required for tapetum and pollen development. The polypeptide is Anther-specific protein RTS (Oryza sativa subsp. japonica (Rice)).